The sequence spans 166 residues: Small ribosomal subunit protein eS10 (166 aa).

A disordered region spans residues 95-166 (RRQTRPETAR…FGRGRGQQPQ (72 aa)). A compositionally biased stretch (basic and acidic residues) spans 98-129 (TRPETARPRPKGLEGERPARLARGEGDRDAYR). Low complexity predominate over residues 143 to 154 (AGAGAATEFQFR). A compositionally biased stretch (gly residues) spans 155 to 166 (GGFGRGRGQQPQ).

This sequence belongs to the eukaryotic ribosomal protein eS10 family. Component of the small ribosomal subunit.

The protein localises to the cytoplasm. It is found in the nucleus. The protein resides in the nucleolus. In terms of biological role, component of the 40S ribosomal subunit. The ribosome is a large ribonucleoprotein complex responsible for the synthesis of proteins in the cell. This Ictalurus punctatus (Channel catfish) protein is Small ribosomal subunit protein eS10 (rps10).